Reading from the N-terminus, the 502-residue chain is Lysine--tRNA ligase (502 aa).

Mg(2+) contacts are provided by Glu-398 and Glu-405.

It belongs to the class-II aminoacyl-tRNA synthetase family. As to quaternary structure, homodimer. Mg(2+) is required as a cofactor.

Its subcellular location is the cytoplasm. It catalyses the reaction tRNA(Lys) + L-lysine + ATP = L-lysyl-tRNA(Lys) + AMP + diphosphate. In Thermosipho melanesiensis (strain DSM 12029 / CIP 104789 / BI429), this protein is Lysine--tRNA ligase.